A 331-amino-acid polypeptide reads, in one-letter code: D-lactate dehydrogenase (331 aa).

NAD(+) contacts are provided by residues 156–157 (RI), aspartate 176, 206–207 (MP), 233–235 (TAR), and aspartate 259. Arginine 235 is an active-site residue. Glutamate 264 is an active-site residue. The active-site Proton donor is the histidine 296.

This sequence belongs to the D-isomer specific 2-hydroxyacid dehydrogenase family.

It catalyses the reaction (R)-lactate + NAD(+) = pyruvate + NADH + H(+). This chain is D-lactate dehydrogenase (ldhD), found in Treponema pallidum (strain Nichols).